Consider the following 501-residue polypeptide: L-arabinose isomerase (501 aa).

Mn(2+) contacts are provided by E307, E334, H351, and H450.

The protein belongs to the arabinose isomerase family. The cofactor is Mn(2+).

It catalyses the reaction beta-L-arabinopyranose = L-ribulose. It functions in the pathway carbohydrate degradation; L-arabinose degradation via L-ribulose; D-xylulose 5-phosphate from L-arabinose (bacterial route): step 1/3. Its function is as follows. Catalyzes the conversion of L-arabinose to L-ribulose. This Acidothermus cellulolyticus (strain ATCC 43068 / DSM 8971 / 11B) protein is L-arabinose isomerase.